A 232-amino-acid polypeptide reads, in one-letter code: 5'-methylthioadenosine/S-adenosylhomocysteine nucleosidase (232 aa).

Glu12 (proton acceptor) is an active-site residue. Substrate contacts are provided by residues Gly78, Met153, and 174-175 (ME). Asp198 serves as the catalytic Proton donor.

It belongs to the PNP/UDP phosphorylase family. MtnN subfamily.

The enzyme catalyses S-adenosyl-L-homocysteine + H2O = S-(5-deoxy-D-ribos-5-yl)-L-homocysteine + adenine. It catalyses the reaction S-methyl-5'-thioadenosine + H2O = 5-(methylsulfanyl)-D-ribose + adenine. The catalysed reaction is 5'-deoxyadenosine + H2O = 5-deoxy-D-ribose + adenine. Its pathway is amino-acid biosynthesis; L-methionine biosynthesis via salvage pathway; S-methyl-5-thio-alpha-D-ribose 1-phosphate from S-methyl-5'-thioadenosine (hydrolase route): step 1/2. Catalyzes the irreversible cleavage of the glycosidic bond in both 5'-methylthioadenosine (MTA) and S-adenosylhomocysteine (SAH/AdoHcy) to adenine and the corresponding thioribose, 5'-methylthioribose and S-ribosylhomocysteine, respectively. Also cleaves 5'-deoxyadenosine, a toxic by-product of radical S-adenosylmethionine (SAM) enzymes, into 5-deoxyribose and adenine. The protein is 5'-methylthioadenosine/S-adenosylhomocysteine nucleosidase of Geobacillus sp. (strain WCH70).